The primary structure comprises 292 residues: uncharacterized protein (292 aa).

Residues 175-197 form a helical membrane-spanning segment; sequence VLNFYFTALPYAIDGIISGIGVF.

It localises to the membrane. This is an uncharacterized protein from Methanocaldococcus jannaschii (strain ATCC 43067 / DSM 2661 / JAL-1 / JCM 10045 / NBRC 100440) (Methanococcus jannaschii).